The following is a 122-amino-acid chain: LYR motif-containing protein 1 (122 aa).

This sequence belongs to the complex I LYR family.

Functionally, may promote cell proliferation and inhibition of apoptosis of preadipocytes. The sequence is that of LYR motif-containing protein 1 (Lyrm1) from Mus musculus (Mouse).